Here is a 173-residue protein sequence, read N- to C-terminus: MKATSKAKTHPPGATAAKDPQKQVIIYTDGACLGNPGPGGYGVVLLYGEHRKELSGGYRLTTNNRMEILAAIKGLEALKSACSVTLYSDSQYLVNAINKGWAQRWKANGWKRNAREKALNPDLWERLLELCSRHDITFVWVRGHANNKENERCDVLSKEAAGRADLKADPGYP.

The interval methionine 1–proline 20 is disordered. An RNase H type-1 domain is found at proline 20 to glycine 162. Mg(2+) contacts are provided by aspartate 29, glutamate 67, aspartate 89, and aspartate 154.

The protein belongs to the RNase H family. As to quaternary structure, monomer. The cofactor is Mg(2+).

Its subcellular location is the cytoplasm. It catalyses the reaction Endonucleolytic cleavage to 5'-phosphomonoester.. Endonuclease that specifically degrades the RNA of RNA-DNA hybrids. This Syntrophus aciditrophicus (strain SB) protein is Ribonuclease H.